The chain runs to 134 residues: Phospholipase A2 (134 aa).

Positions 8, 10, and 12 each coordinate Ca(2+). Intrachain disulfides connect cysteine 9–cysteine 31, cysteine 30–cysteine 70, cysteine 37–cysteine 63, cysteine 61–cysteine 95, and cysteine 105–cysteine 113. Asparagine 13 carries N-linked (GlcNAc...) asparagine glycosylation. Residue histidine 34 is part of the active site. Aspartate 35 contributes to the Ca(2+) binding site. Aspartate 64 is an active-site residue.

Belongs to the phospholipase A2 family. Group III subfamily. The cofactor is Ca(2+). As to expression, expressed by the venom gland.

Its subcellular location is the secreted. The enzyme catalyses a 1,2-diacyl-sn-glycero-3-phosphocholine + H2O = a 1-acyl-sn-glycero-3-phosphocholine + a fatty acid + H(+). Its function is as follows. PLA2 catalyzes the calcium-dependent hydrolysis of the 2-acyl groups in 3-sn-phosphoglycerides. This chain is Phospholipase A2, found in Apis cerana cerana (Oriental honeybee).